The following is a 108-amino-acid chain: Virulence-associated protein I (108 aa).

Residues 19–74 form the HTH cro/C1-type domain; the sequence is LREEYLKPMGLSAHALAKALHVSPSRINEIVREQRGITADTALRLVRYFGGDAQSW. The H-T-H motif DNA-binding region spans 30 to 49; the sequence is SAHALAKALHVSPSRINEIV.

This sequence belongs to the VapA/VapI family.

This is Virulence-associated protein I (vapI) from Dichelobacter nodosus (Bacteroides nodosus).